Consider the following 1015-residue polypeptide: Formate dehydrogenase, nitrate-inducible, major subunit (1015 aa).

The segment at residues 1–33 (MDVSRRQFFKICAGGMAGTTVAALGFAPKQALA) is a signal peptide (tat-type signal). The region spanning 43–106 (AKEIRNTCTY…GLLDYVNSEN (64 aa)) is the 4Fe-4S Mo/W bis-MGD-type domain. [4Fe-4S] cluster contacts are provided by C50, C53, C57, and C92. U196 is a Mo-bis(molybdopterin guanine dinucleotide) binding site. Position 196 (U196) is a non-standard amino acid, selenocysteine.

It belongs to the prokaryotic molybdopterin-containing oxidoreductase family. In terms of assembly, trimer of heterotrimers, consisting of subunits alpha, beta and gamma. Mo-bis(molybdopterin guanine dinucleotide) is required as a cofactor. [4Fe-4S] cluster serves as cofactor. In terms of processing, exported by the Tat system. The position of the signal peptide cleavage has not been experimentally proven.

It is found in the periplasm. It catalyses the reaction a quinone + formate + H(+) = a quinol + CO2. Its function is as follows. Formate dehydrogenase allows E.coli to use formate as major electron donor during anaerobic respiration, when nitrate is used as electron acceptor. The alpha subunit FdnG contains the formate oxidation site. Electrons are transferred from formate to menaquinone in the gamma subunit (FdnI), through the 4Fe-4S clusters in the beta subunit (FdnH). Formate dehydrogenase-N is part of a system that generates proton motive force, together with the dissimilatory nitrate reductase (Nar). The polypeptide is Formate dehydrogenase, nitrate-inducible, major subunit (fdnG) (Escherichia coli (strain K12)).